A 273-amino-acid chain; its full sequence is Dermonecrotic toxin LapSicTox-alphaIB1b2 (273 aa).

H5 is a catalytic residue. Mg(2+) contacts are provided by E25 and D27. H41 serves as the catalytic Nucleophile. 2 disulfide bridges follow: C45/C51 and C47/C190. D85 contacts Mg(2+). An N-linked (GlcNAc...) asparagine glycan is attached at N250.

The protein belongs to the arthropod phospholipase D family. Class II subfamily. Mg(2+) is required as a cofactor. As to expression, expressed by the venom gland.

The protein localises to the secreted. The enzyme catalyses an N-(acyl)-sphingosylphosphocholine = an N-(acyl)-sphingosyl-1,3-cyclic phosphate + choline. The catalysed reaction is an N-(acyl)-sphingosylphosphoethanolamine = an N-(acyl)-sphingosyl-1,3-cyclic phosphate + ethanolamine. It catalyses the reaction a 1-acyl-sn-glycero-3-phosphocholine = a 1-acyl-sn-glycero-2,3-cyclic phosphate + choline. It carries out the reaction a 1-acyl-sn-glycero-3-phosphoethanolamine = a 1-acyl-sn-glycero-2,3-cyclic phosphate + ethanolamine. Its function is as follows. Dermonecrotic toxins cleave the phosphodiester linkage between the phosphate and headgroup of certain phospholipids (sphingolipid and lysolipid substrates), forming an alcohol (often choline) and a cyclic phosphate. This toxin acts on sphingomyelin (SM). It may also act on ceramide phosphoethanolamine (CPE), lysophosphatidylcholine (LPC) and lysophosphatidylethanolamine (LPE), but not on lysophosphatidylserine (LPS), and lysophosphatidylglycerol (LPG). It acts by transphosphatidylation, releasing exclusively cyclic phosphate products as second products. Induces dermonecrosis, hemolysis, increased vascular permeability, edema, inflammatory response, and platelet aggregation. The polypeptide is Dermonecrotic toxin LapSicTox-alphaIB1b2 (Loxosceles apachea (Apache recluse spider)).